The primary structure comprises 205 residues: GTP cyclohydrolase-2 (205 aa).

Residue 49-53 (RIHSE) participates in GTP binding. Positions 54, 65, and 67 each coordinate Zn(2+). GTP-binding positions include glutamine 70, 92–94 (EGR), and threonine 114. The active-site Proton acceptor is the aspartate 126. The active-site Nucleophile is the arginine 128. Threonine 149 and lysine 154 together coordinate GTP.

Belongs to the GTP cyclohydrolase II family. It depends on Zn(2+) as a cofactor.

It catalyses the reaction GTP + 4 H2O = 2,5-diamino-6-hydroxy-4-(5-phosphoribosylamino)-pyrimidine + formate + 2 phosphate + 3 H(+). Its pathway is cofactor biosynthesis; riboflavin biosynthesis; 5-amino-6-(D-ribitylamino)uracil from GTP: step 1/4. In terms of biological role, catalyzes the conversion of GTP to 2,5-diamino-6-ribosylamino-4(3H)-pyrimidinone 5'-phosphate (DARP), formate and pyrophosphate. This chain is GTP cyclohydrolase-2, found in Shewanella sediminis (strain HAW-EB3).